The following is a 574-amino-acid chain: Glycine--tRNA ligase (574 aa).

The substrate site is built by R96 and E162. Residues R194–E196, I204–F209, E327–C328, and G450–R453 contribute to the ATP site. A substrate-binding site is contributed by F209–E213. E446–G450 is a binding site for substrate.

Belongs to the class-II aminoacyl-tRNA synthetase family.

Its subcellular location is the cytoplasm. The catalysed reaction is tRNA(Gly) + glycine + ATP = glycyl-tRNA(Gly) + AMP + diphosphate. Its function is as follows. Catalyzes the attachment of glycine to tRNA(Gly). The polypeptide is Glycine--tRNA ligase (Methanococcus maripaludis (strain C7 / ATCC BAA-1331)).